A 1209-amino-acid chain; its full sequence is MSNFFKICCVKDPGGSAKENLRKMDQVNGHFVSATCPFSGESVELKVDSNQKQVKPNLRIKVPQPIRLKNHVAHDENFDTLHSRINEVTHFNTKCSEKVCQTSIMDIPGRGDTPRTAEEVFKDAQAFLTQYYASIKRENSEAHKARLDEVKRELKERGTYQLKTSELVFGAKLAWRNATRCIGRIQWKKLQIFDCREVTTASGMFEALCNHIKYATNKGNIRSAITIFPQRTDGKHDYRIWNPQLINYAGYQEPDGSITGDPARVEFTEICMKLGWKAPRTPWDILPLVLSADGKDPEFFELPKEIVMEVQFEHPEYDWFKDMGWKWYALPAVSNMRLACGGLEFTANSFNGWYMGTEIGCRNLCDESRLNIVEAVAKKMGLDTNSFVSLWKDKALVEVNIAVLHSFHRDNVSIVDHHSASEQFQKHLENENKSRGGCPADWIWIVPPMSSSLTTVFHQEMALYYIRPSYDYQEPPWKTHQWTKSDGTKTVHRKFHFKQIARAVKFTSKLFGRALSKRIKATILYATETGKSEHYAKELGTIFGHAFNAQVHCMSEYDMFSIEHETLVLIVASTFGNGEPPANGVDFAEHLFQMLYNETNNNRGDGTSDLGSGTFKTPTPKSLMRSNSMMTPSFEYKRQLTRLESNKSSVAGASSIEQIGPLSNVCFAVFGLGSSAYPKFCHFGKTVDKILGDLGGERILELACGDELYGQEQQFRAWSSKIFQVACETFCLDENGMVKDAKKALGDVPLTEETVRFGKYQGDTKLKAALEASFRKQLITCKVKENKNLGDFSADRATVFVDMQPETEFKYDPGDHVGVLACNRKEIVDAVLERMKDVDDYDKTVQLQVMKETLTPTGAIKTWEQHERLPAVTIRQIFTRFLDITTPPSTTVLKYLSKACTDQNDAAQLKELAIDSNKYDDWRHLHYPHLAEVLAQFPSCRPQASLLAALLPSLQPRFYSISSSPLAHPHRIHITCAVVVYRTQNGQGPMHYGVCSTYLQNLKPEDEALVFIRRAPSFHMPKDLSAPLILVGPGSGIAPFRGFWHHRKHQIKNLIPNKQKPGPVWLFFGCRNRGMDLYKEEKEKALADGVLSKVFLALSREDSVEKKHIQTLLEDEGAEISRMLLDENGHFYVCGDCKMAEEVQQKLKEIMKKHAKMTEQEYEEFILNLMDENRYHEDIFGITLRTAEVQSASREFAKRTRQESQKSQT.

S103 is a (6R)-L-erythro-5,6,7,8-tetrahydrobiopterin binding site. A heme b-binding site is contributed by C181. Q244, W353, Y354, E358, and N363 together coordinate L-arginine. (6R)-L-erythro-5,6,7,8-tetrahydrobiopterin-binding residues include W444 and F457. Y472 is a heme b binding site. Residues 491–511 form a calmodulin-binding region; it reads VHRKFHFKQIARAVKFTSKLF. One can recognise a Flavodoxin-like domain in the interval 521–723; the sequence is ATILYATETG…QFRAWSSKIF (203 aa). 527 to 531 provides a ligand contact to FMN; that stretch reads TETGK. A disordered region spans residues 603–622; sequence RGDGTSDLGSGTFKTPTPKS. Position 669-700 (669-700) interacts with FMN; it reads VFGLGSSAYPKFCHFGKTVDKILGDLGGERIL. The FAD-binding FR-type domain maps to 776-1021; that stretch reads KQLITCKVKE…IRRAPSFHMP (246 aa). Residues 811–822 and 954–964 each bind FAD; these read YDPGDHVGVLAC and LQPRFYSISSS. NADP(+) contacts are provided by residues 1028 to 1147 and 1128 to 1143; these read LILV…QQKL and NGHF…AEEV.

The protein belongs to the NOS family. Heme b serves as cofactor. Requires FAD as cofactor. The cofactor is FMN. As to expression, constitutively expressed at a low level in the larval fat body, hemocyte, Malpighian tubule, midgut, silk gland and adult antenna.

The catalysed reaction is 2 L-arginine + 3 NADPH + 4 O2 + H(+) = 2 L-citrulline + 2 nitric oxide + 3 NADP(+) + 4 H2O. With respect to regulation, expression is dependent on and stimulated by NADPH, calcium, BH4 and calmodulin. The activity is not dependent on FAD and is not stimulated by its presence. Produces nitric oxide (NO) which is a messenger molecule with diverse functions throughout the body. Involved in the induction of immune gene expression. This is Nitric oxide synthase from Bombyx mori (Silk moth).